The chain runs to 304 residues: UDP-3-O-acyl-N-acetylglucosamine deacetylase (304 aa).

Zn(2+) contacts are provided by H78, H237, and D241. Catalysis depends on H264, which acts as the Proton donor.

It belongs to the LpxC family. Zn(2+) serves as cofactor.

The catalysed reaction is a UDP-3-O-[(3R)-3-hydroxyacyl]-N-acetyl-alpha-D-glucosamine + H2O = a UDP-3-O-[(3R)-3-hydroxyacyl]-alpha-D-glucosamine + acetate. Its pathway is glycolipid biosynthesis; lipid IV(A) biosynthesis; lipid IV(A) from (3R)-3-hydroxytetradecanoyl-[acyl-carrier-protein] and UDP-N-acetyl-alpha-D-glucosamine: step 2/6. Functionally, catalyzes the hydrolysis of UDP-3-O-myristoyl-N-acetylglucosamine to form UDP-3-O-myristoylglucosamine and acetate, the committed step in lipid A biosynthesis. This chain is UDP-3-O-acyl-N-acetylglucosamine deacetylase, found in Legionella pneumophila (strain Paris).